The sequence spans 296 residues: uncharacterized protein (296 aa).

The next 6 helical transmembrane spans lie at 1–21 (MVNLLFLFFIMSFFPNNIFDY), 30–50 (LITASLKILFALAILLIGFWL), 71–91 (FISFAGNISYYLLLVVFFVLC), 92–112 (LAQLGIQTSSLVALLGASTLA), 113–133 (IGLALQGSLANVAGGILLVLF), and 142–162 (IEVAGIEGIVESIEILSTTIC).

The protein belongs to the MscS (TC 1.A.23) family.

It is found in the cell membrane. This is an uncharacterized protein from Synechocystis sp. (strain ATCC 27184 / PCC 6803 / Kazusa).